The primary structure comprises 282 residues: Bifunctional protein FolD (282 aa).

NADP(+)-binding positions include 164–166 (GAS), isoleucine 189, and isoleucine 230.

Belongs to the tetrahydrofolate dehydrogenase/cyclohydrolase family. Homodimer.

It carries out the reaction (6R)-5,10-methylene-5,6,7,8-tetrahydrofolate + NADP(+) = (6R)-5,10-methenyltetrahydrofolate + NADPH. It catalyses the reaction (6R)-5,10-methenyltetrahydrofolate + H2O = (6R)-10-formyltetrahydrofolate + H(+). It functions in the pathway one-carbon metabolism; tetrahydrofolate interconversion. Functionally, catalyzes the oxidation of 5,10-methylenetetrahydrofolate to 5,10-methenyltetrahydrofolate and then the hydrolysis of 5,10-methenyltetrahydrofolate to 10-formyltetrahydrofolate. This chain is Bifunctional protein FolD, found in Campylobacter jejuni subsp. doylei (strain ATCC BAA-1458 / RM4099 / 269.97).